The chain runs to 889 residues: Inter-alpha-trypsin inhibitor heavy chain H3 (889 aa).

The signal sequence occupies residues 1–21 (MRTMWWPCLVLALLSGLETSG). A propeptide spanning residues 22 to 33 (FPRSPLQLLGKR) is cleaved from the precursor. The VIT domain occupies 29 to 158 (LLGKRSLPEG…KVTFELTYEE (130 aa)). Residue Asn91 is glycosylated (N-linked (GlcNAc...) asparagine). The region spanning 284–467 (NIVFVIDVSG…LQLQGFYEEV (184 aa)) is the VWFA domain. The N-linked (GlcNAc...) asparagine glycan is linked to Asn580. Residue Asp649 is modified to Aspartate 1-(chondroitin 4-sulfate)-ester. Residues 650 to 889 (PHFIIQIPGK…HTDYIVPSLF (240 aa)) constitute a propeptide that is removed on maturation.

The protein belongs to the ITIH family. As to quaternary structure, I-alpha-I plasma protease inhibitors are assembled from one or two heavy chains (HC) and one light chain, bikunin. Pre-alpha-inhibitor (P-alpha-I) is composed of ITIH3/HC3 and bikunin. In terms of processing, heavy chains are linked to bikunin via chondroitin 4-sulfate esterified to the alpha-carboxyl of the C-terminal aspartate after propeptide cleavage. In terms of tissue distribution, expressed in both liver and brain.

Its subcellular location is the secreted. Functionally, may act as a carrier of hyaluronan in serum or as a binding protein between hyaluronan and other matrix protein, including those on cell surfaces in tissues to regulate the localization, synthesis and degradation of hyaluronan which are essential to cells undergoing biological processes. The chain is Inter-alpha-trypsin inhibitor heavy chain H3 (Itih3) from Mus musculus (Mouse).